Here is an 838-residue protein sequence, read N- to C-terminus: MANIRIHEIAKELGYSNKEILEKAKELGFKVTTSSSAVTPEDAAQLYDYVQSGKKPESPEKKDIKQNTQKEAPETQTQQKPIEQEVETKQNIDSTPIKVEPKQESLASSTLSKRRGLVIVKKKKVEVQPIQKQQSEPINKGLEAIFGSSDENLKKKKKEKKPIIATKKENSAKIDLLSAISFSDDISIDDEDVVVLPDLTVKPIEIERQNTVKKQINVYKTSQNNSFSFEGGIQRNSRKKHKKVVKDKDNEDISSVDIPKEIRLYEFADKIKKSSSEVIAKLFILGKMTTKNDFLEEDEIEILGAEFGIEVNIVDTKEDFDYVKAYEDEILEDNSVSRAPVVTIMGHVDHGKTSLLDYIRNSRVASGEAGGITQHVGAYMVEKSGKNITFIDTPGHEAFTAMRARGASVTDIVIIVVAADDGVKPQTKEAINHAKAAGVPIIIAINKMDKESANPDLVKTGLAELDILPTEWGGGYEFVPISAKTGIGIEDLLEIVLLQAELLELKANPDREAKATIIESSLQKGRGPVATAIVENGTLRVGDTIVAGVAYGKVRALQDDKGNSLKSIKPGECGVIIGLSEVPDAGETLISVKTDKEAREYAQKKYDYLRQKELSKSTKVTIDELSAKIAEGELKSLPVIIKADVQGSLEAIKASLEKLKNDEIKVDIIHSGVGGISQSDITLASASSNCVILGFNIRPTGDVKEKAKERSVEIKTYNVIYNLIDDVKALLSGLMSPIISEEELGQAVIRQVINVPKIGQIAGCMVTDGSINRGAKIRVIRDGVVVFEGNVSSLKRFKDDVKEVAKGYECGVGIEGYNDMREGDYIESYKEVESKVEL.

The tract at residues Val50–Ser108 is disordered. Over residues Lys54–Lys65 the composition is skewed to basic and acidic residues. Over residues Gln66 to Pro81 the composition is skewed to polar residues. Positions Ser337 to Lys506 constitute a tr-type G domain. Residues Gly346–Thr353 form a G1 region. Gly346–Thr353 is a GTP binding site. The G2 stretch occupies residues Gly371–His375. The interval Asp392–Gly395 is G3. GTP contacts are provided by residues Asp392–His396 and Asn446–Asp449. A G4 region spans residues Asn446–Asp449. The segment at Ser482–Lys484 is G5.

It belongs to the TRAFAC class translation factor GTPase superfamily. Classic translation factor GTPase family. IF-2 subfamily.

Its subcellular location is the cytoplasm. Its function is as follows. One of the essential components for the initiation of protein synthesis. Protects formylmethionyl-tRNA from spontaneous hydrolysis and promotes its binding to the 30S ribosomal subunits. Also involved in the hydrolysis of GTP during the formation of the 70S ribosomal complex. The polypeptide is Translation initiation factor IF-2 (Campylobacter fetus subsp. fetus (strain 82-40)).